The following is a 243-amino-acid chain: Ubiquinone/menaquinone biosynthesis C-methyltransferase UbiE (243 aa).

S-adenosyl-L-methionine is bound by residues threonine 69, aspartate 90, and 116–117 (DA).

It belongs to the class I-like SAM-binding methyltransferase superfamily. MenG/UbiE family.

It carries out the reaction a 2-demethylmenaquinol + S-adenosyl-L-methionine = a menaquinol + S-adenosyl-L-homocysteine + H(+). It catalyses the reaction a 2-methoxy-6-(all-trans-polyprenyl)benzene-1,4-diol + S-adenosyl-L-methionine = a 5-methoxy-2-methyl-3-(all-trans-polyprenyl)benzene-1,4-diol + S-adenosyl-L-homocysteine + H(+). It participates in quinol/quinone metabolism; menaquinone biosynthesis; menaquinol from 1,4-dihydroxy-2-naphthoate: step 2/2. It functions in the pathway cofactor biosynthesis; ubiquinone biosynthesis. Functionally, methyltransferase required for the conversion of demethylmenaquinol (DMKH2) to menaquinol (MKH2) and the conversion of 2-polyprenyl-6-methoxy-1,4-benzoquinol (DDMQH2) to 2-polyprenyl-3-methyl-6-methoxy-1,4-benzoquinol (DMQH2). This Burkholderia cenocepacia (strain ATCC BAA-245 / DSM 16553 / LMG 16656 / NCTC 13227 / J2315 / CF5610) (Burkholderia cepacia (strain J2315)) protein is Ubiquinone/menaquinone biosynthesis C-methyltransferase UbiE.